A 225-amino-acid polypeptide reads, in one-letter code: NAD(P)H-quinone oxidoreductase subunit K, chloroplastic (225 aa).

[4Fe-4S] cluster contacts are provided by cysteine 43, cysteine 44, cysteine 108, and cysteine 139.

It belongs to the complex I 20 kDa subunit family. NDH is composed of at least 16 different subunits, 5 of which are encoded in the nucleus. The cofactor is [4Fe-4S] cluster.

Its subcellular location is the plastid. The protein resides in the chloroplast thylakoid membrane. It carries out the reaction a plastoquinone + NADH + (n+1) H(+)(in) = a plastoquinol + NAD(+) + n H(+)(out). The catalysed reaction is a plastoquinone + NADPH + (n+1) H(+)(in) = a plastoquinol + NADP(+) + n H(+)(out). Functionally, NDH shuttles electrons from NAD(P)H:plastoquinone, via FMN and iron-sulfur (Fe-S) centers, to quinones in the photosynthetic chain and possibly in a chloroplast respiratory chain. The immediate electron acceptor for the enzyme in this species is believed to be plastoquinone. Couples the redox reaction to proton translocation, and thus conserves the redox energy in a proton gradient. The chain is NAD(P)H-quinone oxidoreductase subunit K, chloroplastic from Illicium oligandrum (Star anise).